The following is a 164-amino-acid chain: Ubiquitin-fold modifier-conjugating enzyme 1 (164 aa).

The Glycyl thioester intermediate role is filled by Cys-116.

Belongs to the ubiquitin-conjugating enzyme family. UFC1 subfamily.

E2-like enzyme which forms an intermediate with UFM1 via a thioester linkage. In Drosophila willistoni (Fruit fly), this protein is Ubiquitin-fold modifier-conjugating enzyme 1.